A 144-amino-acid chain; its full sequence is Large ribosomal subunit protein uL16 (144 aa).

It belongs to the universal ribosomal protein uL16 family. Part of the 50S ribosomal subunit.

Binds 23S rRNA and is also seen to make contacts with the A and possibly P site tRNAs. In Halalkalibacterium halodurans (strain ATCC BAA-125 / DSM 18197 / FERM 7344 / JCM 9153 / C-125) (Bacillus halodurans), this protein is Large ribosomal subunit protein uL16.